The following is a 235-amino-acid chain: Rab-like protein 3 (235 aa).

The interval 1–235 is small GTPase-like; it reads MASLDRVKVL…GGNFKSLHYD (235 aa). GTP is bound by residues 16 to 21, 148 to 150, and 179 to 180; these read GVGKSS, KLD, and DC.

The protein belongs to the small GTPase superfamily. Rab family. In terms of assembly, homodimer.

Its function is as follows. Required for KRAS signaling regulation and modulation of cell proliferation. Regulator of KRAS prenylation, and probably prenylation of other small GTPases. Required for lymphocyte development and function. Not required for myeloid cell development. The sequence is that of Rab-like protein 3 (rabl3) from Xenopus laevis (African clawed frog).